The primary structure comprises 300 residues: UDP-N-acetylenolpyruvoylglucosamine reductase (300 aa).

The FAD-binding PCMH-type domain occupies 30–194 (KVGGAADFFV…VGATFRLDPA (165 aa)). Residue Arg-174 is part of the active site. Catalysis depends on Ser-223, which acts as the Proton donor. Glu-293 is an active-site residue.

It belongs to the MurB family. It depends on FAD as a cofactor.

Its subcellular location is the cytoplasm. It catalyses the reaction UDP-N-acetyl-alpha-D-muramate + NADP(+) = UDP-N-acetyl-3-O-(1-carboxyvinyl)-alpha-D-glucosamine + NADPH + H(+). The protein operates within cell wall biogenesis; peptidoglycan biosynthesis. Cell wall formation. The sequence is that of UDP-N-acetylenolpyruvoylglucosamine reductase from Geobacter metallireducens (strain ATCC 53774 / DSM 7210 / GS-15).